Here is a 157-residue protein sequence, read N- to C-terminus: Protein Smg homolog (157 aa).

It belongs to the Smg family.

The polypeptide is Protein Smg homolog (Xylella fastidiosa (strain M23)).